Reading from the N-terminus, the 377-residue chain is Protein RecA (377 aa).

An ATP-binding site is contributed by 65 to 72 (GPESSGKT). The tract at residues 329–377 (GDEEAAATKATETKTDAPKDKDKGKTKAKDKPADVTPGQIELAPDKSAK) is disordered. The span at 339–361 (TETKTDAPKDKDKGKTKAKDKPA) shows a compositional bias: basic and acidic residues.

This sequence belongs to the RecA family.

The protein localises to the cytoplasm. Can catalyze the hydrolysis of ATP in the presence of single-stranded DNA, the ATP-dependent uptake of single-stranded DNA by duplex DNA, and the ATP-dependent hybridization of homologous single-stranded DNAs. It interacts with LexA causing its activation and leading to its autocatalytic cleavage. This Levilactobacillus brevis (strain ATCC 367 / BCRC 12310 / CIP 105137 / JCM 1170 / LMG 11437 / NCIMB 947 / NCTC 947) (Lactobacillus brevis) protein is Protein RecA.